A 58-amino-acid polypeptide reads, in one-letter code: uncharacterized protein (58 aa).

This is an uncharacterized protein from Saccharomyces cerevisiae (strain ATCC 204508 / S288c) (Baker's yeast).